Here is a 249-residue protein sequence, read N- to C-terminus: Expansin-A19 (249 aa).

The first 21 residues, 1-21 (MGNIFLQLLAVVALCIAPARS), serve as a signal peptide directing secretion. Residues 41-154 (GGACGYGNLY…QQVKCWRYGG (114 aa)) enclose the Expansin-like EG45 domain. 2 N-linked (GlcNAc...) asparagine glycosylation sites follow: asparagine 116 and asparagine 216. An Expansin-like CBD domain is found at 164–243 (YFELVLVTNM…GWSFGQTFST (80 aa)).

Belongs to the expansin family. Expansin A subfamily.

The protein localises to the secreted. It localises to the cell wall. It is found in the membrane. In terms of biological role, may cause loosening and extension of plant cell walls by disrupting non-covalent bonding between cellulose microfibrils and matrix glucans. No enzymatic activity has been found. May be required for rapid internodal elongation in deepwater rice during submergence. The chain is Expansin-A19 (EXPA19) from Oryza sativa subsp. japonica (Rice).